A 264-amino-acid polypeptide reads, in one-letter code: Small ribosomal subunit protein uS2 (264 aa).

A disordered region spans residues Gly225–Glu264.

The protein belongs to the universal ribosomal protein uS2 family.

The protein is Small ribosomal subunit protein uS2 of Corynebacterium glutamicum (strain R).